A 119-amino-acid polypeptide reads, in one-letter code: Large ribosomal subunit protein bL20c (119 aa).

Belongs to the bacterial ribosomal protein bL20 family.

It localises to the plastid. The protein localises to the chloroplast. Binds directly to 23S ribosomal RNA and is necessary for the in vitro assembly process of the 50S ribosomal subunit. It is not involved in the protein synthesizing functions of that subunit. In Saccharum officinarum (Sugarcane), this protein is Large ribosomal subunit protein bL20c.